The sequence spans 377 residues: Putative zinc metalloprotease Atu1380 (377 aa).

Position 29 (H29) interacts with Zn(2+). The active site involves E30. H33 lines the Zn(2+) pocket. The next 3 helical transmembrane spans lie at 118–140 (VAAG…FGIY), 299–321 (LGIS…LNLM), and 351–373 (VAFR…NDIS). The PDZ domain occupies 129–202 (AILIFAVLFG…TPITVTVERA (74 aa)).

It belongs to the peptidase M50B family. Zn(2+) serves as cofactor.

It localises to the cell inner membrane. In Agrobacterium fabrum (strain C58 / ATCC 33970) (Agrobacterium tumefaciens (strain C58)), this protein is Putative zinc metalloprotease Atu1380.